A 95-amino-acid chain; its full sequence is Aspartyl/glutamyl-tRNA(Asn/Gln) amidotransferase subunit C (95 aa).

It belongs to the GatC family. Heterotrimer of A, B and C subunits.

It carries out the reaction L-glutamyl-tRNA(Gln) + L-glutamine + ATP + H2O = L-glutaminyl-tRNA(Gln) + L-glutamate + ADP + phosphate + H(+). It catalyses the reaction L-aspartyl-tRNA(Asn) + L-glutamine + ATP + H2O = L-asparaginyl-tRNA(Asn) + L-glutamate + ADP + phosphate + 2 H(+). Allows the formation of correctly charged Asn-tRNA(Asn) or Gln-tRNA(Gln) through the transamidation of misacylated Asp-tRNA(Asn) or Glu-tRNA(Gln) in organisms which lack either or both of asparaginyl-tRNA or glutaminyl-tRNA synthetases. The reaction takes place in the presence of glutamine and ATP through an activated phospho-Asp-tRNA(Asn) or phospho-Glu-tRNA(Gln). In Pseudomonas putida (strain ATCC 700007 / DSM 6899 / JCM 31910 / BCRC 17059 / LMG 24140 / F1), this protein is Aspartyl/glutamyl-tRNA(Asn/Gln) amidotransferase subunit C.